A 146-amino-acid polypeptide reads, in one-letter code: Large ribosomal subunit protein uL15 (146 aa).

The disordered stretch occupies residues 1-54 (MTIKLHDLRPAPGSKTPRTRVGRGEGSKGKTAGRGTKGTKARKQVPTTFEGGQM).

The protein belongs to the universal ribosomal protein uL15 family. As to quaternary structure, part of the 50S ribosomal subunit.

Its function is as follows. Binds to the 23S rRNA. This Mycobacterium ulcerans (strain Agy99) protein is Large ribosomal subunit protein uL15.